A 525-amino-acid polypeptide reads, in one-letter code: GMP synthase [glutamine-hydrolyzing] (525 aa).

The 199-residue stretch at 9 to 207 folds into the Glutamine amidotransferase type-1 domain; it reads RILILDFGSQ…VLDVCQCEAL (199 aa). Cys-86 (nucleophile) is an active-site residue. Residues His-181 and Glu-183 contribute to the active site. A GMPS ATP-PPase domain is found at 208–400; the sequence is WTPASIIEDT…LGLPYDMLNR (193 aa). 235-241 is a binding site for ATP; that stretch reads SGGVDSS.

Homodimer.

It catalyses the reaction XMP + L-glutamine + ATP + H2O = GMP + L-glutamate + AMP + diphosphate + 2 H(+). It participates in purine metabolism; GMP biosynthesis; GMP from XMP (L-Gln route): step 1/1. Catalyzes the synthesis of GMP from XMP. The chain is GMP synthase [glutamine-hydrolyzing] from Photorhabdus laumondii subsp. laumondii (strain DSM 15139 / CIP 105565 / TT01) (Photorhabdus luminescens subsp. laumondii).